A 453-amino-acid chain; its full sequence is MKRRKYFGTDGIRGKVGSMPITPDFILKLGWAAGKVLSRFSGGRSNYIIIGKDTRISGYMLESALESGLAAAGLSAALTGPMPTPAIAYLTRTFRAEAGIVISASHNPFYDNGIKFFSIKGTKLDNEVEHSIEIELEKCLTCVDPKELGKASRIVDAAGRYIEFCKGTFPAHLSLRKLKIIVDCANGATYHIAPSVFRELGANVTTIACRPNGVNINKECGTTDIRQLRAHVLAKKADLGIAYDGDGDRVIMVDHFGNKVDGDQMLYIIAREKLHCKQLTGGIVGTLMSNMGLVLALKQLNIPFIRSNVGDRCVLAMLKKQGWNIGGENSGHIVLLDKTTTGDGIIVALQVLSAMVNNCVSLHELCNDVSLLPQILVNVYCSSIKSPLESDLVRKETKAVEQELSEQGRVLLRQSGTEPYIRIMVEGNCCYGKILYLANRIASVIRSEIKSIQ.

Catalysis depends on Ser105, which acts as the Phosphoserine intermediate. The Mg(2+) site is built by Ser105, Asp244, Asp246, and Asp248. The residue at position 105 (Ser105) is a Phosphoserine.

It belongs to the phosphohexose mutase family. Mg(2+) is required as a cofactor. Activated by phosphorylation.

The enzyme catalyses alpha-D-glucosamine 1-phosphate = D-glucosamine 6-phosphate. Its function is as follows. Catalyzes the conversion of glucosamine-6-phosphate to glucosamine-1-phosphate. This is Phosphoglucosamine mutase from Blochmanniella pennsylvanica (strain BPEN).